The chain runs to 585 residues: Protein FAM83D (585 aa).

Positions 1-296 are DUF1669; sequence MAARFELLDD…LYAQSEPISS (296 aa). Position 295 is a phosphoserine (Ser295). 2 disordered regions span residues 334-411 and 425-482; these read LSST…TSSS and AASS…SQGS. The segment at 337-585 is required for interaction with KIF22 and function in chromosome congression; sequence TPRKSNLGPE…RDIALYPPYQ (249 aa). Composition is skewed to basic and acidic residues over residues 347 to 360 and 369 to 383; these read EPPKDRAKPKRPDS and DYFHSHKDQLEDSKV. A compositionally biased stretch (polar residues) spans 425 to 441; it reads AASSQATVWSKSTTTQT. Ser458 is modified (phosphoserine). Residues 458–482 are compositionally biased toward low complexity; sequence SPASKMSVSRSSSVRSSSSVSSQGS. Residue Thr511 is modified to Phosphothreonine.

The protein belongs to the FAM83 family. In terms of assembly, interacts with FBXW7; promotes FBXW7 degradation. May interact with RAF1. Interacts with KIF22; recruits KIF22 to mitotic spindle microtubules. Interacts (via C-terminus) with DYNLL1. Interacts with HMMR. Directly interacts (via DUF1669) with CSNK1A1 and CSNK1A1L. Phosphorylated during mitosis.

The protein localises to the cytoplasm. Its subcellular location is the cytoskeleton. The protein resides in the spindle. It is found in the spindle pole. Functionally, through the degradation of FBXW7, may act indirectly on the expression and downstream signaling of MTOR, JUN and MYC. May play also a role in cell proliferation through activation of the ERK1/ERK2 signaling cascade. May also be important for proper chromosome congression and alignment during mitosis through its interaction with KIF22. This Mus musculus (Mouse) protein is Protein FAM83D.